The chain runs to 206 residues: Ion-translocating oxidoreductase complex subunit G (206 aa).

Residues 9–29 (GITLALFAAGSTGLTAVINQM) traverse the membrane as a helical segment. Position 174 is an FMN phosphoryl threonine (T174).

It belongs to the RnfG family. The complex is composed of six subunits: RsxA, RsxB, RsxC, RsxD, RsxE and RsxG. The cofactor is FMN.

Its subcellular location is the cell inner membrane. In terms of biological role, part of a membrane-bound complex that couples electron transfer with translocation of ions across the membrane. Required to maintain the reduced state of SoxR. This chain is Ion-translocating oxidoreductase complex subunit G, found in Salmonella typhi.